A 283-amino-acid polypeptide reads, in one-letter code: F-box only protein 27 (283 aa).

The interval 1-23 (MGASVSRGRAARVPAPEPEPEEA) is disordered. The 48-residue stretch at 23 to 70 (ALDLSQLPPELLLVVLSHVPPRTLLGRCRQVCRGWRALVDGQALWLLI) folds into the F-box domain. Positions 104–280 (FCARRPIGRN…VTNSSVIVRV (177 aa)) constitute an FBA domain.

As to quaternary structure, part of a SCF (SKP1-cullin-F-box) protein ligase complex. Interacts with SKP1 and CUL1. In terms of tissue distribution, predominantly expressed in brain, heart and kidney. Expressed at lower levels in liver and lung.

In terms of biological role, substrate-recognition component of the SCF (SKP1-CUL1-F-box protein)-type E3 ubiquitin ligase complex. Able to recognize and bind denatured glycoproteins, which are modified with complex-type oligosaccharides. This Homo sapiens (Human) protein is F-box only protein 27 (FBXO27).